Here is a 93-residue protein sequence, read N- to C-terminus: CRISPR-associated endoribonuclease Cas2 (93 aa).

Residue D8 participates in Mg(2+) binding.

It belongs to the CRISPR-associated endoribonuclease Cas2 protein family. In terms of assembly, homodimer, forms a heterotetramer with a Cas1 homodimer. It depends on Mg(2+) as a cofactor.

Its function is as follows. CRISPR (clustered regularly interspaced short palindromic repeat), is an adaptive immune system that provides protection against mobile genetic elements (viruses, transposable elements and conjugative plasmids). CRISPR clusters contain sequences complementary to antecedent mobile elements and target invading nucleic acids. CRISPR clusters are transcribed and processed into CRISPR RNA (crRNA). Functions as a ssRNA-specific endoribonuclease. Involved in the integration of spacer DNA into the CRISPR cassette. The sequence is that of CRISPR-associated endoribonuclease Cas2 from Thermofilum pendens (strain DSM 2475 / Hrk 5).